We begin with the raw amino-acid sequence, 196 residues long: dTTP/UTP pyrophosphatase (196 aa).

Asp72 (proton acceptor) is an active-site residue.

Belongs to the Maf family. YhdE subfamily. A divalent metal cation serves as cofactor.

Its subcellular location is the cytoplasm. The catalysed reaction is dTTP + H2O = dTMP + diphosphate + H(+). The enzyme catalyses UTP + H2O = UMP + diphosphate + H(+). Functionally, nucleoside triphosphate pyrophosphatase that hydrolyzes dTTP and UTP. May have a dual role in cell division arrest and in preventing the incorporation of modified nucleotides into cellular nucleic acids. This is dTTP/UTP pyrophosphatase from Chlamydia caviae (strain ATCC VR-813 / DSM 19441 / 03DC25 / GPIC) (Chlamydophila caviae).